We begin with the raw amino-acid sequence, 267 residues long: Apolipoprotein A-I (267 aa).

The first 18 residues, Met-1–Ala-18, serve as a signal peptide directing secretion. A run of 2 repeats spans residues Leu-68–Gly-89 and Pro-90–Ser-111. A 10 X approximate tandem repeats region spans residues Leu-68–Gln-267. The residue at position 110 (Met-110) is a Methionine sulfoxide. Residues Lys-112–Gln-122 form a 3; half-length repeat. 5 consecutive repeat copies span residues Pro-123–Glu-144, Pro-145–Ser-166, Pro-167–Ala-188, Pro-189–Gly-210, and Ala-211–Lys-232. Met-136 bears the Methionine sulfoxide mark. One copy of the 9; half-length repeat lies at Pro-233–Leu-243. Repeat 10 spans residues Pro-244 to Gln-267.

Belongs to the apolipoprotein A1/A4/E family. In terms of assembly, homodimer. Interacts with APOA1BP and CLU. Component of a sperm activating protein complex (SPAP), consisting of APOA1, an immunoglobulin heavy chain, an immunoglobulin light chain and albumin. Interacts with NDRG1. Interacts with SCGB3A2. Interacts with NAXE and YJEFN3. In terms of processing, glycosylated. Post-translationally, palmitoylated. Phosphorylation sites are present in the extracellular medium. Major protein of plasma HDL, also found in chylomicrons.

The protein resides in the secreted. In terms of biological role, participates in the reverse transport of cholesterol from tissues to the liver for excretion by promoting cholesterol efflux from tissues and by acting as a cofactor for the lecithin cholesterol acyltransferase (LCAT). As part of the SPAP complex, activates spermatozoa motility. The chain is Apolipoprotein A-I (APOA1) from Pan troglodytes (Chimpanzee).